A 163-amino-acid polypeptide reads, in one-letter code: Putative phosphinothricin acetyltransferase YwnH (163 aa).

The 158-residue stretch at 1 to 158 (MTLRLAEHRD…DGKRYDLKIL (158 aa)) folds into the N-acetyltransferase domain. Residues 85–87 (IYI), 94–98 (KGVGS), and 124–126 (NKP) each bind acetyl-CoA.

Belongs to the acetyltransferase family. PAT/BAR subfamily.

The enzyme catalyses phosphinothricin + acetyl-CoA = N-acetylphosphinothricin + CoA + H(+). This enzyme is an effector of phosphinothricin tripeptide (PTT or bialaphos) resistance. Inactivates PTT by transfer of an acetyl group. This Bacillus subtilis (strain 168) protein is Putative phosphinothricin acetyltransferase YwnH (ywnH).